Here is a 254-residue protein sequence, read N- to C-terminus: Triosephosphate isomerase (254 aa).

Residue 12 to 14 (NWK) coordinates substrate. The Electrophile role is filled by H99. Residue E169 is the Proton acceptor of the active site. Substrate contacts are provided by residues G175, S214, and 235-236 (GG).

It belongs to the triosephosphate isomerase family. As to quaternary structure, homodimer.

It is found in the cytoplasm. It catalyses the reaction D-glyceraldehyde 3-phosphate = dihydroxyacetone phosphate. It functions in the pathway carbohydrate biosynthesis; gluconeogenesis. It participates in carbohydrate degradation; glycolysis; D-glyceraldehyde 3-phosphate from glycerone phosphate: step 1/1. Its function is as follows. Involved in the gluconeogenesis. Catalyzes stereospecifically the conversion of dihydroxyacetone phosphate (DHAP) to D-glyceraldehyde-3-phosphate (G3P). This is Triosephosphate isomerase from Xanthobacter autotrophicus (strain ATCC BAA-1158 / Py2).